Reading from the N-terminus, the 342-residue chain is N-acetyl-gamma-glutamyl-phosphate reductase (342 aa).

The active site involves Cys-149.

This sequence belongs to the NAGSA dehydrogenase family. Type 1 subfamily.

It localises to the cytoplasm. It carries out the reaction N-acetyl-L-glutamate 5-semialdehyde + phosphate + NADP(+) = N-acetyl-L-glutamyl 5-phosphate + NADPH + H(+). Its pathway is amino-acid biosynthesis; L-arginine biosynthesis; N(2)-acetyl-L-ornithine from L-glutamate: step 3/4. Catalyzes the NADPH-dependent reduction of N-acetyl-5-glutamyl phosphate to yield N-acetyl-L-glutamate 5-semialdehyde. This chain is N-acetyl-gamma-glutamyl-phosphate reductase, found in Aromatoleum aromaticum (strain DSM 19018 / LMG 30748 / EbN1) (Azoarcus sp. (strain EbN1)).